The chain runs to 445 residues: Phosphoglucosamine mutase (445 aa).

Serine 99 (phosphoserine intermediate) is an active-site residue. Mg(2+) contacts are provided by serine 99, aspartate 242, aspartate 244, and aspartate 246. Residue serine 99 is modified to Phosphoserine.

Belongs to the phosphohexose mutase family. Mg(2+) serves as cofactor. Activated by phosphorylation.

It catalyses the reaction alpha-D-glucosamine 1-phosphate = D-glucosamine 6-phosphate. In terms of biological role, catalyzes the conversion of glucosamine-6-phosphate to glucosamine-1-phosphate. In Campylobacter jejuni subsp. jejuni serotype O:23/36 (strain 81-176), this protein is Phosphoglucosamine mutase.